The primary structure comprises 949 residues: Glycine dehydrogenase (decarboxylating) (949 aa).

Residue lysine 700 is modified to N6-(pyridoxal phosphate)lysine.

It belongs to the GcvP family. As to quaternary structure, the glycine cleavage system is composed of four proteins: P, T, L and H. Pyridoxal 5'-phosphate serves as cofactor.

It carries out the reaction N(6)-[(R)-lipoyl]-L-lysyl-[glycine-cleavage complex H protein] + glycine + H(+) = N(6)-[(R)-S(8)-aminomethyldihydrolipoyl]-L-lysyl-[glycine-cleavage complex H protein] + CO2. In terms of biological role, the glycine cleavage system catalyzes the degradation of glycine. The P protein binds the alpha-amino group of glycine through its pyridoxal phosphate cofactor; CO(2) is released and the remaining methylamine moiety is then transferred to the lipoamide cofactor of the H protein. The sequence is that of Glycine dehydrogenase (decarboxylating) from Flavobacterium johnsoniae (strain ATCC 17061 / DSM 2064 / JCM 8514 / BCRC 14874 / CCUG 350202 / NBRC 14942 / NCIMB 11054 / UW101) (Cytophaga johnsonae).